The primary structure comprises 561 residues: Long-chain-fatty-acid--CoA ligase (561 aa).

ATP is bound at residue 213 to 224 (YTGGTTGVAKGA).

Belongs to the ATP-dependent AMP-binding enzyme family. The cofactor is Mg(2+).

The protein localises to the membrane. It catalyses the reaction a long-chain fatty acid + ATP + CoA = a long-chain fatty acyl-CoA + AMP + diphosphate. It functions in the pathway lipid metabolism; fatty acid beta-oxidation. Functionally, catalyzes the esterification, concomitant with transport, of exogenous long-chain fatty acids into metabolically active CoA thioesters for subsequent degradation or incorporation into phospholipids. In Salmonella typhi, this protein is Long-chain-fatty-acid--CoA ligase (fadD).